The sequence spans 210 residues: MSSAKEIKKSILAPVLDNNPIALQVLGVCSALAVTTKLETAFVMTLAVMFVTAFSNLFVSLIRHHIPNSVRIIVQMAIIASLVIVVDQILRAYLYDISKQLSVFVGLIITNCIVMGRAEAFAMKSAPIPSFIDGIGNGLGYGFVLITVGFFRELLGSGKLFGMEVLPLVKDGGWYQPNGLMLLAPSAFFLIGFMIWAIRTFKPEQLEAKE.

Helical transmembrane passes span 11-31 (ILAPVLDNNPIALQVLGVCSA), 42-62 (FVMTLAVMFVTAFSNLFVSLI), 70-90 (VRIIVQMAIIASLVIVVDQIL), 103-123 (VFVGLIITNCIVMGRAEAFAM), 131-151 (FIDGIGNGLGYGFVLITVGFF), and 178-198 (NGLMLLAPSAFFLIGFMIWAI).

This sequence belongs to the NqrDE/RnfAE family. As to quaternary structure, composed of six subunits; NqrA, NqrB, NqrC, NqrD, NqrE and NqrF.

The protein resides in the cell inner membrane. It carries out the reaction a ubiquinone + n Na(+)(in) + NADH + H(+) = a ubiquinol + n Na(+)(out) + NAD(+). Functionally, NQR complex catalyzes the reduction of ubiquinone-1 to ubiquinol by two successive reactions, coupled with the transport of Na(+) ions from the cytoplasm to the periplasm. NqrA to NqrE are probably involved in the second step, the conversion of ubisemiquinone to ubiquinol. The protein is Na(+)-translocating NADH-quinone reductase subunit D of Vibrio anguillarum (Listonella anguillarum).